The following is a 266-amino-acid chain: Undecaprenyl-diphosphatase (266 aa).

8 helical membrane-spanning segments follow: residues 1-21 (MDTFQVIILALIQGLTEFLPI), 39-59 (QGLSFDVAVNTGSLLAVVIYF), 87-107 (WWIILATLPAVFFGFMAKDFI), 111-131 (LRSAEVIAVTTIVFGLLLWWA), 149-169 (ALLIGFAQALALIPGTSRSGA), 183-203 (AAARFSFLMSVPVSLGAAILV), 218-238 (ALTLGTLVSFVAAYLCIHYFL), and 246-266 (MTPFVIYRLILGAVLCGFIFL).

This sequence belongs to the UppP family.

The protein resides in the cell inner membrane. The enzyme catalyses di-trans,octa-cis-undecaprenyl diphosphate + H2O = di-trans,octa-cis-undecaprenyl phosphate + phosphate + H(+). In terms of biological role, catalyzes the dephosphorylation of undecaprenyl diphosphate (UPP). Confers resistance to bacitracin. The protein is Undecaprenyl-diphosphatase of Shewanella putrefaciens (strain CN-32 / ATCC BAA-453).